A 247-amino-acid chain; its full sequence is Pyrroloquinoline-quinone synthase (247 aa).

Belongs to the PqqC family.

The catalysed reaction is 6-(2-amino-2-carboxyethyl)-7,8-dioxo-1,2,3,4,7,8-hexahydroquinoline-2,4-dicarboxylate + 3 O2 = pyrroloquinoline quinone + 2 H2O2 + 2 H2O + H(+). The protein operates within cofactor biosynthesis; pyrroloquinoline quinone biosynthesis. In terms of biological role, ring cyclization and eight-electron oxidation of 3a-(2-amino-2-carboxyethyl)-4,5-dioxo-4,5,6,7,8,9-hexahydroquinoline-7,9-dicarboxylic-acid to PQQ. This is Pyrroloquinoline-quinone synthase from Rhizobium rhizogenes (strain K84 / ATCC BAA-868) (Agrobacterium radiobacter).